Here is a 143-residue protein sequence, read N- to C-terminus: Putative pre-16S rRNA nuclease (143 aa).

This sequence belongs to the YqgF nuclease family.

The protein localises to the cytoplasm. Its function is as follows. Could be a nuclease involved in processing of the 5'-end of pre-16S rRNA. The protein is Putative pre-16S rRNA nuclease of Mesomycoplasma hyopneumoniae (strain 232) (Mycoplasma hyopneumoniae).